The primary structure comprises 734 residues: PI-PLC X-box domain-containing protein DDB_G0293730 (734 aa).

Residues Ile-8–Lys-70 adopt a coiled-coil conformation. The 165-residue stretch at Lys-440–Leu-604 folds into the PI-PLC X-box domain.

This chain is PI-PLC X-box domain-containing protein DDB_G0293730, found in Dictyostelium discoideum (Social amoeba).